Reading from the N-terminus, the 159-residue chain is Phosphopantetheine adenylyltransferase (159 aa).

T9 serves as a coordination point for substrate. ATP is bound by residues 9–10 (TF) and H17. Positions 41, 73, and 87 each coordinate substrate. Residues 88–90 (GLR), E98, and 123–129 (YSYISST) each bind ATP.

The protein belongs to the bacterial CoaD family. Homohexamer. Requires Mg(2+) as cofactor.

The protein resides in the cytoplasm. The enzyme catalyses (R)-4'-phosphopantetheine + ATP + H(+) = 3'-dephospho-CoA + diphosphate. The protein operates within cofactor biosynthesis; coenzyme A biosynthesis; CoA from (R)-pantothenate: step 4/5. In terms of biological role, reversibly transfers an adenylyl group from ATP to 4'-phosphopantetheine, yielding dephospho-CoA (dPCoA) and pyrophosphate. The chain is Phosphopantetheine adenylyltransferase from Azotobacter vinelandii (strain DJ / ATCC BAA-1303).